A 458-amino-acid polypeptide reads, in one-letter code: Cell death abnormality protein 8 (458 aa).

The Cytoplasmic portion of the chain corresponds to 1–45 (MFLKKHKSKLLLVPRDEEQEDAGIVAVLTDRIPSVLLVRWFDLFC). Residues 46–66 (FGFAMCSYALDFFSDIGIAIF) traverse the membrane as a helical segment. At 67–77 (HFWAGRYLSGS) the chain is on the extracellular side. A helical membrane pass occupies residues 78–98 (LVLAFALLPSVIINIISMVWM). The Cytoplasmic segment spans residues 99 to 123 (LDDEMHWKRRAHPRRTGTFELNQKR). The helical transmembrane segment at 124 to 144 (FIPLSKMIVLCICQMGPLFWY) threads the bilayer. Residues 145 to 219 (YKALYYGWMF…YYQTGTYPYW (75 aa)) lie on the Extracellular side of the membrane. A helical membrane pass occupies residues 220 to 240 (LYFQAASLLLSIISISWSVVV). Topologically, residues 241-274 (QNRSLRMIRDDKVNIWPHEAVLQFCWRFLTILAR) are cytoplasmic. Transmembrane regions (helical) follow at residues 275-295 (IITL…LISV) and 296-316 (HLLV…DACT). A topological domain (extracellular) is located at residue histidine 317. The chain crosses the membrane as a helical span at residues 318–338 (IEKLLLLINTFIHIFIPFNMV). At 339–353 (EGNTRWRYLTAYSVE) the chain is on the cytoplasmic side. The chain crosses the membrane as a helical span at residues 354–374 (FIEMMLVCWLLPLSLNTFPYI). The Extracellular segment spans residues 375–378 (EKVQ). Residues 379-399 (VGVPISFIAGIAIMMMYYQFF) form a helical membrane-spanning segment. Residues 400–458 (HPNRRQLIVTQSQEDLSLNVQKSVETLTPKLESSLEISGEQNTSQDLVSELLLDVEHEN) lie on the Cytoplasmic side of the membrane.

Belongs to the XK family. In terms of processing, cleavage by ced-3 activates ced-8 function in promoting phosphatidylserine exposure at the surface of apoptotic cells.

The protein resides in the cell membrane. It carries out the reaction a 1,2-diacyl-sn-glycero-3-phospho-L-serine(in) = a 1,2-diacyl-sn-glycero-3-phospho-L-serine(out). In terms of biological role, phospholipid scramblase that acts downstream of ced-9 and caspase ced-3 to promote phosphatidylserine exposure on apoptotic cell surface. Phosphatidylserine is a specific marker only present at the surface of apoptotic cells and acts as a specific signal for engulfment. Regulates apoptosis kinetics during embryonic development. Not required for engulfment of germ cell corpses. The sequence is that of Cell death abnormality protein 8 from Caenorhabditis elegans.